The primary structure comprises 156 residues: Ribosomal RNA large subunit methyltransferase H (156 aa).

S-adenosyl-L-methionine is bound by residues Leu-73, Gly-104, and 123-128; that span reads ISSMTL.

Belongs to the RNA methyltransferase RlmH family. Homodimer.

The protein localises to the cytoplasm. The catalysed reaction is pseudouridine(1915) in 23S rRNA + S-adenosyl-L-methionine = N(3)-methylpseudouridine(1915) in 23S rRNA + S-adenosyl-L-homocysteine + H(+). Specifically methylates the pseudouridine at position 1915 (m3Psi1915) in 23S rRNA. This is Ribosomal RNA large subunit methyltransferase H from Janthinobacterium sp. (strain Marseille) (Minibacterium massiliensis).